The sequence spans 631 residues: Plastidic ATP/ADP-transporter (631 aa).

11 consecutive transmembrane segments (helical) span residues 106–126, 149–169, 180–200, 238–258, 271–290, 313–333, 369–389, 407–427, 442–462, 465–485, and 543–563; these read IELV…CILF, IIPF…MLLY, ALFY…GFVL, LFYV…FWGF, FYPL…GRTV, GMMS…WWVN, LATL…TWKS, DFST…QWIF, VLLL…PLAP, AKFG…QNIF, and LASS…AWLG. Positions 586 to 631 are disordered; the sequence is ERASLKIPVVSQNENGNGPLSSESSLNPAGGDSTNASSEPSSPRSL. The span at 595-631 shows a compositional bias: polar residues; the sequence is VSQNENGNGPLSSESSLNPAGGDSTNASSEPSSPRSL.

The protein belongs to the ADP/ATP translocase tlc (TC 2.A.12.2) family.

It localises to the plastid. The protein resides in the chloroplast membrane. In Solanum tuberosum (Potato), this protein is Plastidic ATP/ADP-transporter.